The primary structure comprises 802 residues: Oligophrenin-1 (802 aa).

The PH domain maps to 265 to 368 (QPTIEGYLYT…WMEAMDGKEP (104 aa)). The Rho-GAP domain occupies 380 to 564 (MELNEVGFKF…ILIEHFGKIY (185 aa)). Disordered regions lie at residues 569–589 (EESAAPPVPPPRVTARRHKPI), 607–770 (LDES…NAGE), and 783–802 (FETASRKTGSSQGRLPGDES). Over residues 616 to 627 (HQTPNGTITSSI) the composition is skewed to polar residues. Residues 716-732 (HHKEGDADSFSKVRPPG) are compositionally biased toward basic and acidic residues.

Interacts with HOMER1. Interacts with AMPA receptor complexes. Interacts with SH3GL2 (endophilin-A1). Interacts (via C-terminus) with NR1D1.

It localises to the postsynapse. The protein localises to the presynapse. It is found in the cell projection. Its subcellular location is the axon. The protein resides in the dendritic spine. It localises to the dendrite. The protein localises to the cytoplasm. Functionally, stimulates GTP hydrolysis of members of the Rho family. Its action on RHOA activity and signaling is implicated in growth and stabilization of dendritic spines, and therefore in synaptic function. Critical for the stabilization of AMPA receptors at postsynaptic sites. Critical for the regulation of synaptic vesicle endocytosis at pre-synaptic terminals. Required for the localization of NR1D1 to dendrites, can suppress its repressor activity and protect it from proteasomal degradation. The sequence is that of Oligophrenin-1 (OPHN1) from Pan troglodytes (Chimpanzee).